The chain runs to 265 residues: Synaptoporin (265 aa).

Residues 1–4 lie on the Cytoplasmic side of the membrane; the sequence is MCMV. One can recognise an MARVEL domain in the interval 1 to 202; it reads MCMVIFAPLF…NIWFVFKETG (202 aa). A helical transmembrane segment spans residues 5-25; sequence IFAPLFAMFAFATCGGYSGGL. Residues 26–81 are Vesicular-facing; sequence RLSVDCVNKTESNLSIDIAFAYPFRLQQVTFEVPTCEGKEQQKLALVGDSSSSAEF. 2 N-linked (GlcNAc...) asparagine glycosylation sites follow: asparagine 33 and asparagine 38. Residues 82–102 traverse the membrane as a helical segment; the sequence is FVTVAVFAFLYSLAATVVYIF. Residues 103-114 are Cytoplasmic-facing; the sequence is FQNKYRENNRGP. Residues 115 to 135 traverse the membrane as a helical segment; it reads LIDFIVTVVFSFLWLVGSSAW. The Vesicular segment spans residues 136 to 177; the sequence is AKGLSDVKVATDPKEVLLLMSACKQPSNKCMAVHSPVMSSLN. A helical transmembrane segment spans residues 178–198; that stretch reads TSVVFGFLNFILWAGNIWFVF. The Cytoplasmic portion of the chain corresponds to 199 to 265; the sequence is KETGWHSSGQ…SGPTSFNNQI (67 aa). 5 repeat units span residues 210–214, 222–226, 227–231, 232–236, and 238–242. The 5 X approximate repeats stretch occupies residues 210–242; sequence YLSDPMEKHSSSYNQGRYNQESYGSSGGYSQQA. At serine 212 the chain carries Phosphoserine. A compositionally biased stretch (polar residues) spans 221–230; the sequence is SYNQGRYNQE. A disordered region spans residues 221 to 265; it reads SYNQGRYNQESYGSSGGYSQQANLGPTSDEFGQQPSGPTSFNNQI. Residues 240 to 265 are compositionally biased toward polar residues; that stretch reads QQANLGPTSDEFGQQPSGPTSFNNQI.

It belongs to the synaptophysin/synaptobrevin family.

The protein localises to the cytoplasmic vesicle. It localises to the secretory vesicle. It is found in the synaptic vesicle membrane. The protein resides in the synapse. Its subcellular location is the synaptosome. Functionally, intrinsic membrane protein of small synaptic vesicles. Probable vesicular channel protein. The polypeptide is Synaptoporin (Synpr) (Mus musculus (Mouse)).